The sequence spans 70 residues: Small ribosomal subunit protein bS18 (70 aa).

This sequence belongs to the bacterial ribosomal protein bS18 family. In terms of assembly, part of the 30S ribosomal subunit. Forms a tight heterodimer with protein bS6.

Its function is as follows. Binds as a heterodimer with protein bS6 to the central domain of the 16S rRNA, where it helps stabilize the platform of the 30S subunit. The protein is Small ribosomal subunit protein bS18 of Salinibacter ruber (strain DSM 13855 / M31).